Reading from the N-terminus, the 118-residue chain is MRVKTGVVRHRRHKRLLKQARGFYSGRRKHFRKAKEQLERSLVYAYRDRRQKKRDFRKLWIVRINAAARLNDLNYSRFMHGLKLANIELDRKILADMAMNSPESFTKIADASKAALTK.

It belongs to the bacterial ribosomal protein bL20 family.

Its function is as follows. Binds directly to 23S ribosomal RNA and is necessary for the in vitro assembly process of the 50S ribosomal subunit. It is not involved in the protein synthesizing functions of that subunit. This chain is Large ribosomal subunit protein bL20, found in Sulfurovum sp. (strain NBC37-1).